A 358-amino-acid polypeptide reads, in one-letter code: Protein-glutamate methylesterase/protein-glutamine glutaminase 1 (358 aa).

Residues 7-124 (SVLLVDDSAV…KNFLIDSAAE (118 aa)) form the Response regulatory domain. At D58 the chain carries 4-aspartylphosphate. One can recognise a CheB-type methylesterase domain in the interval 170–358 (AQTTERIVAI…QEIHQAILHR (189 aa)). Residues S182, H208, and D304 contribute to the active site.

This sequence belongs to the CheB family. Phosphorylated by CheA. Phosphorylation of the N-terminal regulatory domain activates the methylesterase activity.

It is found in the cytoplasm. It carries out the reaction [protein]-L-glutamate 5-O-methyl ester + H2O = L-glutamyl-[protein] + methanol + H(+). It catalyses the reaction L-glutaminyl-[protein] + H2O = L-glutamyl-[protein] + NH4(+). Its function is as follows. Involved in chemotaxis. Part of a chemotaxis signal transduction system that modulates chemotaxis in response to various stimuli. Catalyzes the demethylation of specific methylglutamate residues introduced into the chemoreceptors (methyl-accepting chemotaxis proteins or MCP) by CheR. Also mediates the irreversible deamidation of specific glutamine residues to glutamic acid. This Pseudomonas savastanoi pv. phaseolicola (strain 1448A / Race 6) (Pseudomonas syringae pv. phaseolicola (strain 1448A / Race 6)) protein is Protein-glutamate methylesterase/protein-glutamine glutaminase 1.